A 546-amino-acid chain; its full sequence is Glutathione reductase (546 aa).

An apicoplast-targeting transit peptide spans 2–46 (YKHRYFHFFFFFFFFLVSTKIIRSFTFLNNNTNLSNPVYFKKKAN). Residues Ser58 and Gly59 each coordinate FAD. Ser58 contacts glutathione. Arg65 is a binding site for glutathione. 4 residues coordinate FAD: Glu78, Thr85, Cys86, and Lys94. An intrachain disulfide couples Cys86 to Cys91. Tyr141 provides a ligand contact to glutathione. Ala157 serves as a coordination point for FAD. Residues Ile233, Glu236, Arg253, Arg259, and Gly318 each coordinate NADP(+). Residues Asp358 and Thr400 each contribute to the FAD site. Residue Arg408 coordinates glutathione. Val430 provides a ligand contact to NADP(+). His531 provides a ligand contact to FAD. The active-site Proton acceptor is His531.

This sequence belongs to the class-I pyridine nucleotide-disulfide oxidoreductase family. Homodimer. FAD serves as cofactor.

Its subcellular location is the cytoplasm. It localises to the plastid. The protein resides in the apicoplast. The enzyme catalyses 2 glutathione + NADP(+) = glutathione disulfide + NADPH + H(+). Catalyzes the reduction of glutathione disulfide (GSSG) to reduced glutathione (GSH). Constitutes the major mechanism to maintain a high GSH:GSSG ratio in the cytosol. The polypeptide is Glutathione reductase (Plasmodium falciparum (isolate 3D7)).